Consider the following 227-residue polypeptide: Cytochrome c oxidase subunit 2 (227 aa).

Topologically, residues 1–14 (MAYPFQLGLXDATS) are mitochondrial intermembrane. Residues 15–45 (PIMEELLHFHDHTLMIVFLISSLVLYIITLM) traverse the membrane as a helical segment. The Mitochondrial matrix segment spans residues 46–59 (LTTKLTHTSTMDAQ). A helical transmembrane segment spans residues 60 to 87 (EVETVWTILPAIILILIALPSLRILYMM). At 88–227 (DEINNPSLTV…YFETWSAVMV (140 aa)) the chain is on the mitochondrial intermembrane side. Cu cation contacts are provided by His161, Cys196, Glu198, Cys200, His204, and Met207. Glu198 is a Mg(2+) binding site.

It belongs to the cytochrome c oxidase subunit 2 family. Component of the cytochrome c oxidase (complex IV, CIV), a multisubunit enzyme composed of 14 subunits. The complex is composed of a catalytic core of 3 subunits MT-CO1, MT-CO2 and MT-CO3, encoded in the mitochondrial DNA, and 11 supernumerary subunits COX4I, COX5A, COX5B, COX6A, COX6B, COX6C, COX7A, COX7B, COX7C, COX8 and NDUFA4, which are encoded in the nuclear genome. The complex exists as a monomer or a dimer and forms supercomplexes (SCs) in the inner mitochondrial membrane with NADH-ubiquinone oxidoreductase (complex I, CI) and ubiquinol-cytochrome c oxidoreductase (cytochrome b-c1 complex, complex III, CIII), resulting in different assemblies (supercomplex SCI(1)III(2)IV(1) and megacomplex MCI(2)III(2)IV(2)). Found in a complex with TMEM177, COA6, COX18, COX20, SCO1 and SCO2. Interacts with TMEM177 in a COX20-dependent manner. Interacts with COX20. Interacts with COX16. Requires Cu cation as cofactor.

It localises to the mitochondrion inner membrane. It carries out the reaction 4 Fe(II)-[cytochrome c] + O2 + 8 H(+)(in) = 4 Fe(III)-[cytochrome c] + 2 H2O + 4 H(+)(out). In terms of biological role, component of the cytochrome c oxidase, the last enzyme in the mitochondrial electron transport chain which drives oxidative phosphorylation. The respiratory chain contains 3 multisubunit complexes succinate dehydrogenase (complex II, CII), ubiquinol-cytochrome c oxidoreductase (cytochrome b-c1 complex, complex III, CIII) and cytochrome c oxidase (complex IV, CIV), that cooperate to transfer electrons derived from NADH and succinate to molecular oxygen, creating an electrochemical gradient over the inner membrane that drives transmembrane transport and the ATP synthase. Cytochrome c oxidase is the component of the respiratory chain that catalyzes the reduction of oxygen to water. Electrons originating from reduced cytochrome c in the intermembrane space (IMS) are transferred via the dinuclear copper A center (CU(A)) of subunit 2 and heme A of subunit 1 to the active site in subunit 1, a binuclear center (BNC) formed by heme A3 and copper B (CU(B)). The BNC reduces molecular oxygen to 2 water molecules using 4 electrons from cytochrome c in the IMS and 4 protons from the mitochondrial matrix. The chain is Cytochrome c oxidase subunit 2 (MT-CO2) from Vulpes corsac (Corsac fox).